Reading from the N-terminus, the 135-residue chain is Histone H3 type 3 (135 aa).

Positions 1–40 (MARTKQTARKSTGGKAPRKQLATKAARKTPATGGVKKPHR) are disordered. The residue at position 5 (lysine 5) is an N6-methyllysine. At lysine 10 the chain carries N6-acetyllysine; alternate. Position 10 is an N6-methyllysine; alternate (lysine 10). Phosphoserine is present on serine 11. Residue threonine 12 is modified to Phosphothreonine. Residues lysine 15, lysine 19, and lysine 24 each carry the N6-acetyllysine modification. An N6-acetyllysine; alternate modification is found at lysine 28. N6-methyllysine; alternate is present on lysine 28. N6-methyllysine is present on residues lysine 36 and lysine 37.

The protein belongs to the histone H3 family. As to quaternary structure, the nucleosome is a histone octamer containing two molecules each of H2A, H2B, H3 and H4 assembled in one H3-H4 heterotetramer and two H2A-H2B heterodimers. The octamer wraps approximately 147 bp of DNA. In terms of processing, acetylation is generally linked to gene activation. Acetylated to form H3K9ac (11%), H3K14ac (17%), H3K18ac (11%), H3K23ac (16%) and H3K27ac (7%). H3K4, H3K35 and H3K36 are not acetylated. H3K4me prevents acetylation. 32% of the histone H3 are acetylated with, on average, 2.4 acetyl-Lys. They are all continuously deacatylated and re-acetylated with a half-life of approximately 2 minutes. Post-translationally, monomethylated to form H3K4me1 (81%), H3K9me1 (16%), H3K27me1 (25%), H3K35me1 (25%) and H3K36me1 (5%). No methylation at H3K14, H3K18 and H3K23. Methylated by a protein complex that includes Mut11. Set1 methylates specifically H3K4. H3K4me1 is associated with silenced euchromatin. Set3 forms H3K9me1, while H3K9me2 is undetected. H3K9me1 is specifically associated with silent, multi-copy transgenes. No phosphorylation detected.

It localises to the nucleus. The protein resides in the chromosome. Core component of nucleosome. Nucleosomes wrap and compact DNA into chromatin, limiting DNA accessibility to the cellular machineries which require DNA as a template. Histones thereby play a central role in transcription regulation, DNA repair, DNA replication and chromosomal stability. DNA accessibility is regulated via a complex set of post-translational modifications of histones, also called histone code, and nucleosome remodeling. This is Histone H3 type 3 (ch3-IV) from Chlamydomonas reinhardtii (Chlamydomonas smithii).